A 103-amino-acid chain; its full sequence is UPF0132 membrane protein AF_0105 (103 aa).

The next 3 helical transmembrane spans lie at 5–25 (VAGA…LLME), 35–55 (AMQS…LSFI), and 58–78 (IGVL…LVCI).

The protein belongs to the UPF0132 family.

It localises to the cell membrane. The sequence is that of UPF0132 membrane protein AF_0105 from Archaeoglobus fulgidus (strain ATCC 49558 / DSM 4304 / JCM 9628 / NBRC 100126 / VC-16).